Consider the following 251-residue polypeptide: Probable transcriptional regulatory protein RSal33209_2002 (251 aa).

This sequence belongs to the TACO1 family.

It localises to the cytoplasm. This Renibacterium salmoninarum (strain ATCC 33209 / DSM 20767 / JCM 11484 / NBRC 15589 / NCIMB 2235) protein is Probable transcriptional regulatory protein RSal33209_2002.